Consider the following 95-residue polypeptide: Osteocalcin 1 (95 aa).

The signal sequence occupies residues 1-21 (MKTLSVLVLCSLAVLCLTSDA). A propeptide spanning residues 22–50 (SFSSQPAVDTPAQEGLFVEQEQASSVVRQ) is cleaved from the precursor. A Gla domain is found at 45-91 (SSVVRQAPKELSLSQLESLREVCELNLACEDMMDTSGIIAAYTTYYG). 3 residues coordinate Ca(2+): glutamate 61, glutamate 65, and glutamate 68. 3 positions are modified to 4-carboxyglutamate: glutamate 61, glutamate 65, and glutamate 68. Cysteines 67 and 73 form a disulfide.

The protein belongs to the osteocalcin/matrix Gla protein family. Post-translationally, gamma-carboxyglutamate residues are formed by vitamin K dependent carboxylation by GGCX. These residues are essential for the binding of calcium.

It localises to the secreted. Its function is as follows. The carboxylated form is one of the main organic components of the bone matrix, which constitutes 1-2% of the total bone protein. The carboxylated form binds strongly to apatite and calcium. This chain is Osteocalcin 1, found in Solea senegalensis (Senegalese sole).